The chain runs to 322 residues: Sideroflexin-1 (322 aa).

Position 2 is an N-acetylserine (serine 2). The Mitochondrial matrix segment spans residues 2 to 102 (SGEVPPNINI…MSAQVPMNMT (101 aa)). Residues 103–120 (ITGCMMTFYRTTPAVLFW) traverse the membrane as a helical segment. Topologically, residues 121–146 (QWINQSFNAVVNYTNRSGDAPLTVNE) are mitochondrial intermembrane. Residues 147-167 (LGTAYVSATTGAVATALGLNA) form a helical membrane-spanning segment. The Mitochondrial matrix segment spans residues 168 to 174 (LTKRVSP). The chain crosses the membrane as a helical span at residues 175–195 (LIGRFVPFAAVAAANCINIPL). The Mitochondrial intermembrane portion of the chain corresponds to 196–228 (MRQRELKVGIPVTDENGTRLGESTNAAKQAITQ). A helical transmembrane segment spans residues 229–249 (VVISRILMAAPGMAIPPFIMN). The Mitochondrial matrix segment spans residues 250–266 (TLEKKAFLKRFPWMSAP). The helical transmembrane segment at 267 to 287 (IQVTLVGFCLVFATPLCCALF) threads the bilayer. Over 288-322 (PQKSSMSVTSLEDELQASIQRTHPEIRRVYFNKGL) the chain is Mitochondrial intermembrane.

This sequence belongs to the sideroflexin family. In terms of tissue distribution, widely expressed, with highest expression in kidney and liver.

The protein localises to the mitochondrion inner membrane. The catalysed reaction is L-serine(in) = L-serine(out). It catalyses the reaction L-alanine(in) = L-alanine(out). It carries out the reaction L-cysteine(in) = L-cysteine(out). Its function is as follows. Amino acid transporter importing serine, an essential substrate of the mitochondrial branch of the one-carbon pathway, into mitochondria. Mitochondrial serine is then converted to glycine and formate, which exits to the cytosol where it is used to generate the charged folates that serve as one-carbon donors. May also transport other amino acids including alanine and cysteine. The chain is Sideroflexin-1 from Mus musculus (Mouse).